The primary structure comprises 252 residues: Clc-like protein 2 (252 aa).

4 consecutive transmembrane segments (helical) span residues 7-29 (YAIL…TPAW), 91-111 (LFHI…SFCV), 127-147 (VFLV…AVYS), and 173-193 (IALT…VHVL).

The protein belongs to the Clc family.

The protein localises to the membrane. The polypeptide is Clc-like protein 2 (clc-2) (Caenorhabditis elegans).